The sequence spans 457 residues: Peptidyl-prolyl cis-trans isomerase FKBP5 (457 aa).

An N-acetylmethionine modification is found at Met1. The span at 1–11 (MTTDEGAKNSR) shows a compositional bias: basic and acidic residues. The interval 1-27 (MTTDEGAKNSRENPTATVAEQGEDVTS) is disordered. An N6-acetyllysine modification is found at Lys28. 2 consecutive PPIase FKBP-type domains span residues 50–138 (GDKV…LDFK) and 165–251 (GARV…KSFE). TPR repeat units lie at residues 268–301 (AAIVKEKGTLYFKGGKYVQAVIQYGKIVSWLEME), 317–350 (LAAFLNLAMCYLKLREYTKAVECCDKALGLDSAN), and 351–384 (EKGLYRRGEAQLLMNEFESAKGDFEKVLEVNPQN). Residues 423-457 (EEANKAMSKKTSEGVTNEKLAVSHAVEEEKPEGHV) are disordered. A Phosphoserine modification is found at Ser445. Basic and acidic residues predominate over residues 447 to 457 (AVEEEKPEGHV).

As to quaternary structure, part of a heteromultimeric cytoplasmic complex with HSP90AA1, HSPA1A/HSPA1B and steroid receptors. Upon ligand binding dissociates from the complex and FKBP4 takes its place. Interacts with functionally mature heterooligomeric progesterone receptor complexes along with HSP90 and TEBP. Interacts with NR3C1. Interacts with Akt/AKT1 and PHLPP1; enhancing dephosphorylation and subsequent activation of Akt/AKT1. Interacts with IFI44L; this interaction modulates the kinase activity of IKBKB and IKBKE. Interacts with IKBKB and IKBKE. Acetylation impairs ability to promote interaction between Akt/AKT1 and PHLPP1. Deacetylation by SIRT7 promotes interaction between Akt/AKT1 and PHLPP1, leading to suppress Akt/AKT1 activation. Post-translationally, ubiquitinated, leading to degradation in a proteasome-dependent manner. Deubiquitinated by USP49, leading to stabilization.

The protein resides in the cytoplasm. It is found in the nucleus. It catalyses the reaction [protein]-peptidylproline (omega=180) = [protein]-peptidylproline (omega=0). Its activity is regulated as follows. Inhibited by both FK506 and rapamycin. Functionally, immunophilin protein with PPIase and co-chaperone activities. Component of unligated steroid receptors heterocomplexes through interaction with heat-shock protein 90 (HSP90). Plays a role in the intracellular trafficking of heterooligomeric forms of steroid hormone receptors maintaining the complex into the cytoplasm when unliganded. Acts as a regulator of Akt/AKT1 activity by promoting the interaction between Akt/AKT1 and PHLPP1, thereby enhancing dephosphorylation and subsequent activation of Akt/AKT1. Interacts with IKBKE and IKBKB which facilitates IKK complex assembly leading to increased IKBKE and IKBKB kinase activity, NF-kappaB activation, and IFN production. The protein is Peptidyl-prolyl cis-trans isomerase FKBP5 (FKBP5) of Aotus nancymaae (Ma's night monkey).